Reading from the N-terminus, the 100-residue chain is Urease subunit gamma (100 aa).

This sequence belongs to the urease gamma subunit family. As to quaternary structure, heterotrimer of UreA (gamma), UreB (beta) and UreC (alpha) subunits. Three heterotrimers associate to form the active enzyme.

The protein resides in the cytoplasm. The enzyme catalyses urea + 2 H2O + H(+) = hydrogencarbonate + 2 NH4(+). It participates in nitrogen metabolism; urea degradation; CO(2) and NH(3) from urea (urease route): step 1/1. The protein is Urease subunit gamma of Bacillus sp. (strain TB-90).